A 650-amino-acid polypeptide reads, in one-letter code: Cytosolic Fe-S cluster assembly factor NAR1 (650 aa).

Cys-22, Cys-81, Cys-84, Cys-87, Cys-215, Cys-270, Cys-480, and Cys-484 together coordinate [4Fe-4S] cluster.

Belongs to the NARF family.

Its function is as follows. Component of the cytosolic Fe/S protein assembly machinery. Required for maturation of extramitochondrial Fe/S proteins. May play a role in the transfer of pre-assembled Fe/S clusters to target apoproteins. The protein is Cytosolic Fe-S cluster assembly factor NAR1 (NAR1) of Cryptococcus neoformans var. neoformans serotype D (strain JEC21 / ATCC MYA-565) (Filobasidiella neoformans).